Reading from the N-terminus, the 189-residue chain is Adenylate kinase (189 aa).

Position 12–17 (glycine 12–threonine 17) interacts with ATP. The interval serine 33 to valine 62 is NMP. AMP contacts are provided by residues threonine 34, arginine 39, asparagine 60 to valine 62, glycine 87 to arginine 90, and glutamine 94. Positions glycine 129–aspartate 135 are LID. Position 130 (arginine 130) interacts with ATP. 2 residues coordinate AMP: arginine 132 and arginine 144. Arginine 172 contributes to the ATP binding site.

Belongs to the adenylate kinase family. Monomer.

The protein localises to the cytoplasm. It carries out the reaction AMP + ATP = 2 ADP. It functions in the pathway purine metabolism; AMP biosynthesis via salvage pathway; AMP from ADP: step 1/1. In terms of biological role, catalyzes the reversible transfer of the terminal phosphate group between ATP and AMP. Plays an important role in cellular energy homeostasis and in adenine nucleotide metabolism. The sequence is that of Adenylate kinase from Campylobacter concisus (strain 13826).